The chain runs to 492 residues: Protein nucleotidyltransferase YdiU (492 aa).

Positions 88, 90, 91, 111, 123, 124, 174, and 181 each coordinate ATP. Asp250 serves as the catalytic Proton acceptor. Positions 251 and 260 each coordinate Mg(2+). Asp260 serves as a coordination point for ATP.

Belongs to the SELO family. It depends on Mg(2+) as a cofactor. The cofactor is Mn(2+).

The enzyme catalyses L-seryl-[protein] + ATP = 3-O-(5'-adenylyl)-L-seryl-[protein] + diphosphate. It carries out the reaction L-threonyl-[protein] + ATP = 3-O-(5'-adenylyl)-L-threonyl-[protein] + diphosphate. The catalysed reaction is L-tyrosyl-[protein] + ATP = O-(5'-adenylyl)-L-tyrosyl-[protein] + diphosphate. It catalyses the reaction L-histidyl-[protein] + UTP = N(tele)-(5'-uridylyl)-L-histidyl-[protein] + diphosphate. The enzyme catalyses L-seryl-[protein] + UTP = O-(5'-uridylyl)-L-seryl-[protein] + diphosphate. It carries out the reaction L-tyrosyl-[protein] + UTP = O-(5'-uridylyl)-L-tyrosyl-[protein] + diphosphate. In terms of biological role, nucleotidyltransferase involved in the post-translational modification of proteins. It can catalyze the addition of adenosine monophosphate (AMP) or uridine monophosphate (UMP) to a protein, resulting in modifications known as AMPylation and UMPylation. The protein is Protein nucleotidyltransferase YdiU of Rhodopseudomonas palustris (strain BisB5).